A 314-amino-acid polypeptide reads, in one-letter code: tRNA pseudouridine synthase B (314 aa).

D41 (nucleophile) is an active-site residue.

Belongs to the pseudouridine synthase TruB family. Type 1 subfamily.

The catalysed reaction is uridine(55) in tRNA = pseudouridine(55) in tRNA. Its function is as follows. Responsible for synthesis of pseudouridine from uracil-55 in the psi GC loop of transfer RNAs. This chain is tRNA pseudouridine synthase B, found in Prochlorococcus marinus (strain NATL2A).